A 1015-amino-acid polypeptide reads, in one-letter code: DNA ligase 3 (1015 aa).

A PARP-type zinc finger spans residues 94–186 (FCVDYAKRGT…QISQHIADLS (93 aa)). 4 residues coordinate Zn(2+): Cys106, Cys109, His140, and Cys143. Phosphoserine is present on residues Ser211, Ser217, Ser228, and Ser244. The segment at 229-255 (GFSAAKPNNSEQAPSSPAPGTSLSASK) is disordered. The segment covering 234–253 (KPNNSEQAPSSPAPGTSLSA) has biased composition (polar residues). Interaction with DNA stretches follow at residues 279–282 (PSYN), 323–328 (VYNLND), 393–396 (TKED), and 426–432 (KMNSGAK). Residue Glu511 coordinates ATP. The N6-AMP-lysine intermediate role is filled by Lys513. ATP is bound by residues Arg518 and Arg533. Mg(2+) is bound by residues Glu565 and Glu660. Lys665, Arg676, and Lys680 together coordinate ATP. The disordered stretch occupies residues 849–926 (DEASPTTGGS…KSSPVKVGMK (78 aa)). A compositionally biased stretch (low complexity) spans 854–884 (TTGGSSGENEGTAGSAGPCKGPPSKSSASAK). Ser919 carries the phosphoserine modification. The BRCT domain maps to 939 to 1015 (VLLDVFTGVR…IRKRRLIAPC (77 aa)).

The protein belongs to the ATP-dependent DNA ligase family. As to quaternary structure, isoform 3 interacts (via BRCT domain) with the nuclear DNA-repair protein XRCC1. Interacts with POLG. Interacts with POLB. Requires Mg(2+) as cofactor. In terms of tissue distribution, the alpha isoform is expressed in all tissues, while the beta isoform is expressed only in the testis.

The protein localises to the nucleus. The enzyme catalyses ATP + (deoxyribonucleotide)n-3'-hydroxyl + 5'-phospho-(deoxyribonucleotide)m = (deoxyribonucleotide)n+m + AMP + diphosphate.. In terms of biological role, the alpha isoform interacts with DNA-repair protein XRCC1 and can correct defective DNA strand-break repair and sister chromatid exchange following treatment with ionizing radiation and alkylating agents. The beta isoform does not interact with XRCC1 and may be specifically involved in the completion of homologous recombination events that occur during meiotic prophase. The sequence is that of DNA ligase 3 (Lig3) from Mus musculus (Mouse).